The primary structure comprises 779 residues: MVEYTAEFTAEEQALIDKEFARLGESTYLDHAGTTLYAESQVLSAAQQLQRDVICNPHTCRATGDYVDQVRYRILEFFNTNADDYHVVFTANATAALRLVADHFDFAGDGNFHYCQENHTSVLGMRQLVKAKGIYMLTKDDIELNVLDQPSTPAPAAAATAQANSLVTFSAQCNFSGYKMPLTVIEQIQKRGLQQLGKCIWSAESQPAAKNVDSNYYVCLDAAAFAASSPLDLQRFRPDFVCVSFYKIFGYPTGVGGLLVSRRGAEVLRKRFYGGGTINYAYPHTMEHQLRNVFHERFEDGTLPFLSIVELLQGFRTLERLVPGRSIERISRHVHGLARYCEHQLKQLKHPNGAPLITLYNHAGYEDRAKQGGTVAFNVRTNTGDYVGFGEVACMAALHRILLRTGCFCNVGACQHFLQLNDETMDAIYKRAGRICGDYFDLLDGQPTGAVRVSFGYMTRIQDVDRFLQMLRNSYLVIAKPQQRFSFIEQQAELLPKALQQRAQRLRPRLLQLAIYPVKSCAAFKIDSSTGSWPLTKQGLQYDREWMIVDMNGMALTQKRCTDLCLIQPRIVGDQLELHYAETSCSMPLSLSVQAANSARCHSKVCRQAIEGYDCGDEVATWLSQSLGLEGVRLLRQSAQRSAPGTQQQQLSLVNQAQFLLVNRASVRSLQFEESLDETVDRFRANIIIDTGTPFEELTYTQLRIGDILFQVDGPCQRCDMICINQRTGERSPETLTTIARMQSGKMRFGIYISRLPSETDDRLEQQQQLTCGDVIVVS.

Position 247 is an N6-(pyridoxal phosphate)lysine (lysine 247). The active site involves cysteine 409. Residues 624–779 form the MOSC domain; that stretch reads SQSLGLEGVR…LTCGDVIVVS (156 aa). Residue serine 732 is modified to Phosphoserine.

The protein belongs to the class-V pyridoxal-phosphate-dependent aminotransferase family. MOCOS subfamily. Requires pyridoxal 5'-phosphate as cofactor.

It carries out the reaction Mo-molybdopterin + L-cysteine + AH2 = thio-Mo-molybdopterin + L-alanine + A + H2O. Its pathway is cofactor biosynthesis; molybdopterin biosynthesis. In terms of biological role, sulfurates the molybdenum cofactor. Sulfation of molybdenum is essential for xanthine dehydrogenase (XDH) and aldehyde oxidase (ADO) enzymes in which molybdenum cofactor is liganded by 1 oxygen and 1 sulfur atom in active form. The polypeptide is Molybdenum cofactor sulfurase (Drosophila mojavensis (Fruit fly)).